The primary structure comprises 255 residues: Vitamin B12 import ATP-binding protein BtuD (255 aa).

Residues 2-240 (MHVKHIALGS…EGLAEVFQTQ (239 aa)) enclose the ABC transporter domain. 30 to 37 (GPNGSGKS) is a binding site for ATP.

It belongs to the ABC transporter superfamily. Vitamin B12 importer (TC 3.A.1.13.1) family. The complex is composed of two ATP-binding proteins (BtuD), two transmembrane proteins (BtuC) and a solute-binding protein (BtuF).

The protein resides in the cell inner membrane. The enzyme catalyses an R-cob(III)alamin(out) + ATP + H2O = an R-cob(III)alamin(in) + ADP + phosphate + H(+). Its function is as follows. Part of the ABC transporter complex BtuCDF involved in vitamin B12 import. Responsible for energy coupling to the transport system. This is Vitamin B12 import ATP-binding protein BtuD from Vibrio campbellii (strain ATCC BAA-1116).